Reading from the N-terminus, the 454-residue chain is Response regulator PleD (454 aa).

Response regulatory domains are found at residues 4 to 120 (RILV…RSLT) and 155 to 269 (RVLI…KTQI). 4 residues coordinate Mg(2+): aspartate 9, aspartate 10, aspartate 53, and methionine 55. Aspartate 53 carries the 4-aspartylphosphate modification. Residues 319–454 (DPVSALLIDI…GRNAVVGKAA (136 aa)) enclose the GGDEF domain. Residues asparagine 335 and aspartate 344 each contribute to the substrate site. The active-site Proton acceptor is the glutamate 370.

Homodimer. Inactive monomer in solution. Phosphorylated by PleC and DivJ. Phosphorylation stimulates cyclase activity.

Its subcellular location is the cytoplasm. The enzyme catalyses 2 GTP = 3',3'-c-di-GMP + 2 diphosphate. It functions in the pathway purine metabolism; 3',5'-cyclic di-GMP biosynthesis. Its activity is regulated as follows. Allosterically inhibited by the product c-di-GMP. In terms of biological role, response regulator that is part of a signal transduction pathway controlling cell differentiation in the swarmer-to-stalked cell transition. Functionally, catalyzes the condensation of two GTP molecules to the cyclic dinucleotide di-GMP (c-di-GMP), which acts as a secondary messenger. The protein is Response regulator PleD (pleD) of Caulobacter vibrioides (strain ATCC 19089 / CIP 103742 / CB 15) (Caulobacter crescentus).